The sequence spans 493 residues: uncharacterized protein (493 aa).

The segment at 96–124 is disordered; sequence TTVAKASPPPAKPASAPTEITWKGSPQFT.

This is an uncharacterized protein from Caulobacter vibrioides (strain ATCC 19089 / CIP 103742 / CB 15) (Caulobacter crescentus).